The following is a 721-amino-acid chain: Kinesin-like protein KIF2C (721 aa).

The globular stretch occupies residues 1-250; the sequence is MESLHARLFP…CSPLTVTDPI (250 aa). 2 positions are modified to phosphoserine: Ser-3 and Ser-19. The residue at position 92 (Ser-92) is a Phosphoserine; by AURKB. The Microtubule tip localization signal motif lies at 95-98; sequence SKIP. Ser-106, Ser-108, Ser-112, Ser-162, Ser-171, Ser-183, and Ser-188 each carry phosphoserine. The tract at residues 164–188 is disordered; it reads EAEEQAHSTRSTSSANPGNSVRRKS. Residues 171–182 are compositionally biased toward polar residues; the sequence is STRSTSSANPGN. Positions 203 to 234 are negative regulator of microtubule-binding; sequence EKRAQNSELRIKRAQEYDSSFPNWEFARMIKE. The region spanning 254-584 is the Kinesin motor domain; the sequence is RICVCVRKRP…LRYADRVKEL (331 aa). ATP is bound by residues Arg-260 and 344–351; that span reads GQTGSGKT. 2 positions are modified to phosphoserine: Ser-515 and Ser-626. Positions 614–652 form a coiled coil; sequence GNEEEELSSQMSSFNEAMTQIRELEERALEELREIIQQG.

It belongs to the TRAFAC class myosin-kinesin ATPase superfamily. Kinesin family. MCAK/KIF2 subfamily. As to quaternary structure, interacts with CENPH. Interacts with MTUS2/TIP150; the interaction is direct. Interacts with MAPRE1; the interaction is direct, regulated by phosphorylation and is probably required for targeting to growing microtubule plus ends. Interacts with KIF18B at microtubule tips; this interaction increases the affinity of both partners for microtubule plus ends and is required for robust microtubule depolymerization. Phosphorylation by AURKA or AURKB strongly reduces KIF18B-binding. Post-translationally, phosphorylation by AURKB, regulates association with centromeres and kinetochores and the microtubule depolymerization activity. In terms of processing, ubiquitinated.

The protein resides in the cytoplasm. It localises to the cytoskeleton. Its subcellular location is the nucleus. The protein localises to the chromosome. It is found in the centromere. The protein resides in the kinetochore. In terms of biological role, in complex with KIF18B, constitutes the major microtubule plus-end depolymerizing activity in mitotic cells. Regulates the turnover of microtubules at the kinetochore and functions in chromosome segregation during mitosis. Plays a role in chromosome congression and is required for the lateral to end-on conversion of the chromosome-microtubule attachment. The sequence is that of Kinesin-like protein KIF2C (Kif2c) from Mus musculus (Mouse).